Here is a 236-residue protein sequence, read N- to C-terminus: MTPRLFALIPCAGTGSRSGSAVPKQYRTLAGRALLHYTLAAFDACSEFAQTLVVLAPDDSHFDARRFAGLRFAVRRCGGGSRQASVLKGLLELAEFGATDHDWVLVHDAARPGITPELIRTLVATLKDDPVGGIVALPVADTLKRVPAGGDAIARTESRDALWQAQTPQMFRIGMLREAILQAQREGHDLTDEASAIEWAGHTPRVVQGSLRNFKVTYPEDFALAEAILARPANAS.

The protein belongs to the IspD/TarI cytidylyltransferase family. IspD subfamily.

The enzyme catalyses 2-C-methyl-D-erythritol 4-phosphate + CTP + H(+) = 4-CDP-2-C-methyl-D-erythritol + diphosphate. Its pathway is isoprenoid biosynthesis; isopentenyl diphosphate biosynthesis via DXP pathway; isopentenyl diphosphate from 1-deoxy-D-xylulose 5-phosphate: step 2/6. Catalyzes the formation of 4-diphosphocytidyl-2-C-methyl-D-erythritol from CTP and 2-C-methyl-D-erythritol 4-phosphate (MEP). In Burkholderia orbicola (strain AU 1054), this protein is 2-C-methyl-D-erythritol 4-phosphate cytidylyltransferase.